Reading from the N-terminus, the 287-residue chain is F420-non-reducing hydrogenase vhu subunit G (287 aa).

Belongs to the [NiFe]/[NiFeSe] hydrogenase small subunit family. As to quaternary structure, the F420-non-reducing hydrogenase vhu is composed of four subunits; VhuA, VhuD, VhuG and VhuU.

The sequence is that of F420-non-reducing hydrogenase vhu subunit G (vhuG) from Methanococcus voltae.